We begin with the raw amino-acid sequence, 125 residues long: Small ribosomal subunit protein uS12 (125 aa).

D89 bears the 3-methylthioaspartic acid mark.

It belongs to the universal ribosomal protein uS12 family. As to quaternary structure, part of the 30S ribosomal subunit. Contacts proteins S8 and S17. May interact with IF1 in the 30S initiation complex.

Its function is as follows. With S4 and S5 plays an important role in translational accuracy. In terms of biological role, interacts with and stabilizes bases of the 16S rRNA that are involved in tRNA selection in the A site and with the mRNA backbone. Located at the interface of the 30S and 50S subunits, it traverses the body of the 30S subunit contacting proteins on the other side and probably holding the rRNA structure together. The combined cluster of proteins S8, S12 and S17 appears to hold together the shoulder and platform of the 30S subunit. The polypeptide is Small ribosomal subunit protein uS12 (Bordetella avium (strain 197N)).